Reading from the N-terminus, the 117-residue chain is Mediator of RNA polymerase II transcription subunit 11 (117 aa).

Alanine 2 carries the N-acetylalanine modification.

This sequence belongs to the Mediator complex subunit 11 family. Component of the Mediator complex, which is composed of MED1, MED4, MED6, MED7, MED8, MED9, MED10, MED11, MED12, MED13, MED13L, MED14, MED15, MED16, MED17, MED18, MED19, MED20, MED21, MED22, MED23, MED24, MED25, MED26, MED27, MED29, MED30, MED31, CCNC, CDK8 and CDC2L6/CDK11. The MED12, MED13, CCNC and CDK8 subunits form a distinct module termed the CDK8 module. Mediator containing the CDK8 module is less active than Mediator lacking this module in supporting transcriptional activation. Individual preparations of the Mediator complex lacking one or more distinct subunits have been variously termed ARC, CRSP, DRIP, PC2, SMCC and TRAP. In terms of tissue distribution, expressed in cochlea.

It is found in the nucleus. In terms of biological role, component of the Mediator complex, a coactivator involved in the regulated transcription of nearly all RNA polymerase II-dependent genes. Mediator functions as a bridge to convey information from gene-specific regulatory proteins to the basal RNA polymerase II transcription machinery. Mediator is recruited to promoters by direct interactions with regulatory proteins and serves as a scaffold for the assembly of a functional pre-initiation complex with RNA polymerase II and the general transcription factors. The sequence is that of Mediator of RNA polymerase II transcription subunit 11 (Med11) from Mus musculus (Mouse).